Reading from the N-terminus, the 426-residue chain is Serine--tRNA ligase (426 aa).

233 to 235 is a binding site for L-serine; that stretch reads TAE. 264–266 is a binding site for ATP; that stretch reads RSE. Glu287 is an L-serine binding site. 351-354 contributes to the ATP binding site; it reads EISS. Ser387 provides a ligand contact to L-serine.

This sequence belongs to the class-II aminoacyl-tRNA synthetase family. Type-1 seryl-tRNA synthetase subfamily. In terms of assembly, homodimer. The tRNA molecule binds across the dimer.

It is found in the cytoplasm. It carries out the reaction tRNA(Ser) + L-serine + ATP = L-seryl-tRNA(Ser) + AMP + diphosphate + H(+). The enzyme catalyses tRNA(Sec) + L-serine + ATP = L-seryl-tRNA(Sec) + AMP + diphosphate + H(+). The protein operates within aminoacyl-tRNA biosynthesis; selenocysteinyl-tRNA(Sec) biosynthesis; L-seryl-tRNA(Sec) from L-serine and tRNA(Sec): step 1/1. Functionally, catalyzes the attachment of serine to tRNA(Ser). Is also able to aminoacylate tRNA(Sec) with serine, to form the misacylated tRNA L-seryl-tRNA(Sec), which will be further converted into selenocysteinyl-tRNA(Sec). This is Serine--tRNA ligase from Pseudomonas putida (strain ATCC 47054 / DSM 6125 / CFBP 8728 / NCIMB 11950 / KT2440).